The primary structure comprises 1295 residues: Protein glp-1 (1295 aa).

The N-terminal stretch at 1-15 (MRVLLILLAFFAPIA) is a signal peptide. Over 16–764 (SQLMGGECGR…NEIDEGWSRS (749 aa)) the chain is Extracellular. 4 consecutive EGF-like domains span residues 19–58 (MGGE…AFCE), 117–152 (GVNP…SYCE), 154–190 (GIDH…RYCE), and 190–230 (ERTE…EFCN). 37 cysteine pairs are disulfide-bonded: Cys-23–Cys-35, Cys-29–Cys-46, Cys-48–Cys-57, Cys-121–Cys-131, Cys-126–Cys-140, Cys-142–Cys-151, Cys-158–Cys-169, Cys-163–Cys-178, Cys-180–Cys-189, Cys-201–Cys-206, Cys-220–Cys-229, Cys-236–Cys-248, Cys-242–Cys-257, Cys-259–Cys-268, Cys-275–Cys-286, Cys-280–Cys-296, Cys-298–Cys-307, Cys-329–Cys-342, Cys-336–Cys-347, Cys-349–Cys-358, Cys-373–Cys-384, Cys-378–Cys-394, Cys-396–Cys-405, Cys-411–Cys-422, Cys-416–Cys-431, Cys-433–Cys-442, Cys-450–Cys-461, Cys-455–Cys-467, Cys-469–Cys-478, Cys-496–Cys-519, Cys-501–Cys-514, Cys-510–Cys-526, Cys-536–Cys-560, Cys-542–Cys-555, Cys-551–Cys-567, Cys-582–Cys-595, and Cys-591–Cys-607. Positions 232–269 (DKNECLIEETCVNNSTCFNLHGDFTCTCKPGYAGKYCE) constitute an EGF-like 5; calcium-binding domain. 2 N-linked (GlcNAc...) asparagine glycosylation sites follow: Asn-244 and Asn-245. 5 EGF-like domains span residues 271–308 (AIDM…QRCE), 316–359 (GGIH…DRCE), 369–406 (DIQS…LNCE), 407–443 (QHLL…DYCE), and 446–479 (DRQL…PTCE). N-linked (GlcNAc...) asparagine glycosylation is present at Asn-333. N-linked (GlcNAc...) asparagine glycosylation occurs at Asn-381. LNR repeat units follow at residues 496–532 (CEQR…GQRP), 536–577 (CQYP…CPAH), and 581–612 (HCIE…NGTE). N-linked (GlcNAc...) asparagine glycosylation is found at Asn-609 and Asn-675. The chain crosses the membrane as a helical span at residues 765–786 (QVILFACIAFLAFGTVVAGVIA). Over 787–1295 (KNGPERSRKR…AEQMNGSFYC (509 aa)) the chain is Cytoplasmic. ANK repeat units lie at residues 961 to 990 (DENT…NPTI), 994 to 1023 (SERS…LLKE), 1030 to 1062 (NGMT…KLDY), 1074 to 1103 (KGRT…NKDK), and 1107 to 1136 (DGRT…SLGI). A disordered region spans residues 1177-1244 (IVKSGHGAKS…TTSTPNRMET (68 aa)). Residues 1201–1210 (KTPTSAASSR) show a composition bias toward polar residues. Residues 1221 to 1239 (DGSFSSPSPHYYPTTTSTP) are compositionally biased toward low complexity.

Interacts with sel-10. As to quaternary structure, when activated, the glp-1/Notch intracellular domain (NICD) may become a component of a complex consisting of at least the NICD, lag-1 and lag-3. Post-translationally, upon binding its ligands, it is cleaved (S2 cleavage) in its extracellular domain, close to the transmembrane domain. S2 cleavage is probably mediated by the metalloproteases adm-4 and sup-17. It is then cleaved (S3 cleavage) downstream of its transmembrane domain, releasing it from the cell membrane; S3 cleavage requires a multiprotein gamma-secretase complex, which may include presenilin sel-12. In terms of tissue distribution, expressed in the distal mitotic region of the germ line. May be absent from the gonadal distal tip cell (DTC).

It localises to the cell membrane. The protein localises to the cell projection. Its subcellular location is the axon. It is found in the nucleus. Its function is as follows. Essential signaling protein which has a major role in germline and embryonic development; involved in cell fate decisions that require cell-cell interactions. Probable membrane-bound receptor for putative ligands lag-2 and apx-1. Upon ligand activation, and releasing from the cell membrane, the glp-1/Notch intracellular domain (NICD) probably forms a transcriptional activator complex with lag-1 and lag-3 and regulates expression of various genes; targets in the germline include lst-1 and sygl-1. Involved in the specification of the cell fates of the blastomeres, ABa and ABp. Proper signaling by glp-1 induces ABa descendants to produce anterior pharyngeal cells, and ABp descendants to adopt a different fate. Contributes to the establishment of the dorsal-ventral axis in early embryos. Required in postmitotic neurons in order to maintain the developmentally arrested larval state known as dauer, probably in response to lag-2. Regulates germ cell mitotic proliferation probably by regulating MAP kinase phosphatase lip-1 expression. Required for oocyte growth control. Plays a negative role in lifespan. The polypeptide is Protein glp-1 (Caenorhabditis elegans).